The primary structure comprises 271 residues: S-adenosylmethionine decarboxylase proenzyme (271 aa).

Ser121 (schiff-base intermediate with substrate; via pyruvic acid) is an active-site residue. Position 121 is a pyruvic acid (Ser); by autocatalysis (Ser121). The active-site Proton acceptor; for processing activity is His126. Cys149 acts as the Proton donor; for catalytic activity in catalysis.

The protein belongs to the prokaryotic AdoMetDC family. Type 2 subfamily. In terms of assembly, heterooctamer of four alpha and four beta chains arranged as a tetramer of alpha/beta heterodimers. The cofactor is pyruvate. Post-translationally, is synthesized initially as an inactive proenzyme. Formation of the active enzyme involves a self-maturation process in which the active site pyruvoyl group is generated from an internal serine residue via an autocatalytic post-translational modification. Two non-identical subunits are generated from the proenzyme in this reaction, and the pyruvate is formed at the N-terminus of the alpha chain, which is derived from the carboxyl end of the proenzyme. The post-translation cleavage follows an unusual pathway, termed non-hydrolytic serinolysis, in which the side chain hydroxyl group of the serine supplies its oxygen atom to form the C-terminus of the beta chain, while the remainder of the serine residue undergoes an oxidative deamination to produce ammonia and the pyruvoyl group blocking the N-terminus of the alpha chain.

It catalyses the reaction S-adenosyl-L-methionine + H(+) = S-adenosyl 3-(methylsulfanyl)propylamine + CO2. The protein operates within amine and polyamine biosynthesis; S-adenosylmethioninamine biosynthesis; S-adenosylmethioninamine from S-adenosyl-L-methionine: step 1/1. Its function is as follows. Catalyzes the decarboxylation of S-adenosylmethionine to S-adenosylmethioninamine (dcAdoMet), the propylamine donor required for the synthesis of the polyamines spermine and spermidine from the diamine putrescine. This chain is S-adenosylmethionine decarboxylase proenzyme, found in Clostridium beijerinckii (strain ATCC 51743 / NCIMB 8052) (Clostridium acetobutylicum).